A 362-amino-acid chain; its full sequence is 3-dehydroquinate synthase (362 aa).

NAD(+)-binding positions include 70–75 (DGEKYK), 104–108 (GVIGD), 128–129 (TT), Lys-141, and Lys-150. 3 residues coordinate Zn(2+): Glu-183, His-246, and His-263.

It belongs to the sugar phosphate cyclases superfamily. Dehydroquinate synthase family. Co(2+) serves as cofactor. It depends on Zn(2+) as a cofactor. Requires NAD(+) as cofactor.

The protein localises to the cytoplasm. It catalyses the reaction 7-phospho-2-dehydro-3-deoxy-D-arabino-heptonate = 3-dehydroquinate + phosphate. It functions in the pathway metabolic intermediate biosynthesis; chorismate biosynthesis; chorismate from D-erythrose 4-phosphate and phosphoenolpyruvate: step 2/7. Its function is as follows. Catalyzes the conversion of 3-deoxy-D-arabino-heptulosonate 7-phosphate (DAHP) to dehydroquinate (DHQ). The sequence is that of 3-dehydroquinate synthase from Acinetobacter baylyi (strain ATCC 33305 / BD413 / ADP1).